We begin with the raw amino-acid sequence, 686 residues long: Proprotein convertase subtilisin/kexin type 9 (686 aa).

The first 28 residues, 1-28 (MGTVSSRRLWWPLPLLLLLLLGPAGTRA), serve as a signal peptide directing secretion. Residues 29-150 (QEDDDDDYEE…IEEDSSVFAQ (122 aa)) constitute a propeptide that is removed on maturation. The residue at position 36 (Tyr-36) is a Sulfotyrosine. Ser-45 is modified (phosphoserine). Residues 75–147 (TYVVVLKEET…VDYIEEDSSV (73 aa)) form the Inhibitor I9 domain. The Peptidase S8 domain maps to 153 to 459 (PWNLERITPA…GWQLFCRTVW (307 aa)). Residues Asp-184 and His-224 each act as charge relay system in the active site. 2 disulfide bridges follow: Cys-221–Cys-253 and Cys-321–Cys-356. Ser-384 acts as the Charge relay system in catalysis. The C-terminal domain stretch occupies residues 448–686 (GEGWQLFCRT…CRSQHLAQAS (239 aa)). 3 cysteine pairs are disulfide-bonded: Cys-455–Cys-525, Cys-475–Cys-524, and Cys-484–Cys-507. Asn-531 carries N-linked (GlcNAc...) asparagine glycosylation. Cystine bridges form between Cys-532–Cys-599, Cys-550–Cys-598, Cys-560–Cys-586, Cys-606–Cys-677, Cys-624–Cys-676, and Cys-633–Cys-652. Ser-686 carries the phosphoserine modification.

This sequence belongs to the peptidase S8 family. In terms of assembly, monomer. Can self-associate to form dimers and higher multimers which may have increased LDLR degrading activity. The precursor protein but not the mature protein may form multimers. Interacts with APOB, VLDLR, LRP8/APOER2 and BACE1. The full-length immature form (pro-PCSK9) interacts with SCNN1A, SCNN1B and SCNN1G. The pro-PCSK9 form (via C-terminal domain) interacts with LDLR. Interacts (via the C-terminal domain) with ANXA2 (via repeat Annexin 1); the interaction inhibits the degradation of LDLR. Requires Ca(2+) as cofactor. In terms of processing, cleavage by furin and PCSK5 generates a truncated inactive protein that is unable to induce LDLR degradation. Post-translationally, undergoes autocatalytic cleavage in the endoplasmic reticulum to release the propeptide from the N-terminus and the cleavage of the propeptide is strictly required for its maturation and activation. The cleaved propeptide however remains associated with the catalytic domain through non-covalent interactions, preventing potential substrates from accessing its active site. As a result, it is secreted from cells as a propeptide-containing, enzymatically inactive protein. Phosphorylation protects the propeptide against proteolysis.

The protein localises to the cytoplasm. It is found in the secreted. Its subcellular location is the endosome. The protein resides in the lysosome. It localises to the cell surface. The protein localises to the endoplasmic reticulum. It is found in the golgi apparatus. With respect to regulation, its proteolytic activity is autoinhibited by the non-covalent binding of the propeptide to the catalytic domain. Inhibited by EGTA. In terms of biological role, crucial player in the regulation of plasma cholesterol homeostasis. Binds to low-density lipid receptor family members: low density lipoprotein receptor (LDLR), very low density lipoprotein receptor (VLDLR), apolipoprotein E receptor (LRP1/APOER) and apolipoprotein receptor 2 (LRP8/APOER2), and promotes their degradation in intracellular acidic compartments. Acts via a non-proteolytic mechanism to enhance the degradation of the hepatic LDLR through a clathrin LDLRAP1/ARH-mediated pathway. May prevent the recycling of LDLR from endosomes to the cell surface or direct it to lysosomes for degradation. Can induce ubiquitination of LDLR leading to its subsequent degradation. Inhibits intracellular degradation of APOB via the autophagosome/lysosome pathway in a LDLR-independent manner. Involved in the disposal of non-acetylated intermediates of BACE1 in the early secretory pathway. Inhibits epithelial Na(+) channel (ENaC)-mediated Na(+) absorption by reducing ENaC surface expression primarily by increasing its proteasomal degradation. Regulates neuronal apoptosis via modulation of LRP8/APOER2 levels and related anti-apoptotic signaling pathways. The protein is Proprotein convertase subtilisin/kexin type 9 (PCSK9) of Saguinus labiatus (Red-chested mustached tamarin).